The following is a 176-amino-acid chain: RING-H2 finger protein ATL14 (176 aa).

The interval 1–26 (MSITIPYDGSISREPSPSPPPPKANT) is disordered. Residues 37 to 57 (FLIGLIMIPVAITAFIFILTS) form a helical membrane-spanning segment. An RING-type; atypical zinc finger spans residues 115–157 (CVVCIDGFRQGQWCRKLPRCGHVFHRKCVDLWLIKVSTCPICR).

The protein belongs to the RING-type zinc finger family. ATL subfamily.

Its subcellular location is the membrane. The enzyme catalyses S-ubiquitinyl-[E2 ubiquitin-conjugating enzyme]-L-cysteine + [acceptor protein]-L-lysine = [E2 ubiquitin-conjugating enzyme]-L-cysteine + N(6)-ubiquitinyl-[acceptor protein]-L-lysine.. It functions in the pathway protein modification; protein ubiquitination. This Arabidopsis thaliana (Mouse-ear cress) protein is RING-H2 finger protein ATL14 (ATL14).